The sequence spans 515 residues: Organic cation/carnitine transporter 5 (515 aa).

At 1–43 (MADSLAPLLPTHIEEDEDTSSPLTFDKILEKSLSDFGFSQFLQ) the chain is on the cytoplasmic side. A helical transmembrane segment spans residues 44 to 64 (IVLVGLALTFDSQQIFITVFT). Residues 65-124 (DAYPTWHCLDHTICNPATTDICKIPRSAWDWDGGFKGKSVISEFDLECSSSFLRSLPSST) lie on the Extracellular side of the membrane. Residues 125-145 (FYVGSIVGGVVLAMIPDGSLG) traverse the membrane as a helical segment. At 146–149 (RKQL) the chain is on the cytoplasmic side. Residues 150–172 (LFFSSFAMSLTGISIFLSSNIWI) form a helical membrane-spanning segment. Residues 173 to 177 (YSFLK) are Extracellular-facing. Residues 178–195 (FVIGFARSQTGTYALVLI) form a helical membrane-spanning segment. An ATP-binding site is contributed by 195-202 (ISERISTK). The Cytoplasmic segment spans residues 196–208 (SERISTKWRPRAT). A helical membrane pass occupies residues 209 to 229 (MVPFTLFVLGFMSLSGIAYLV). At 230-235 (RHASWK) the chain is on the extracellular side. Residues 236-256 (VLYLCTSIPAGIHSIFIYFFA) traverse the membrane as a helical segment. Over 257–320 (LESPRWLHLE…LFIIKWAFRR (64 aa)) the chain is Cytoplasmic. The helical transmembrane segment at 321-341 (VTLVMIIMFGLGMSYYGVPLA) threads the bilayer. The Extracellular segment spans residues 342 to 350 (VRDIKVNIY). Residues 351–371 (MSEALNAMVELPTFVVTPILL) form a helical membrane-spanning segment. Residues 372-379 (EQFSRRSS) lie on the Cytoplasmic side of the membrane. A helical transmembrane segment spans residues 380–400 (VLVNCLIGGASGVLCFVMSLY). Residues 401–411 (GRTKIAFALEL) are Extracellular-facing. Residues 412-432 (GSFFCARIGFNLMAIYLVELF) traverse the membrane as a helical segment. At 433–441 (PTCVRNSAT) the chain is on the cytoplasmic side. Residues 442–462 (MMLRQALVVGGACCPLIASLG) form a helical membrane-spanning segment. Topologically, residues 463 to 467 (RNVPS) are extracellular. A helical transmembrane segment spans residues 468–488 (LSFAVFGFAMSGLGLFALLLP). At 489–515 (ETKGLSLCDTMEEQEQRDQALKTSHSC) the chain is on the cytoplasmic side.

It belongs to the major facilitator (TC 2.A.1) superfamily. Organic cation transporter (TC 2.A.1.19) family. In terms of tissue distribution, mostly expressed in leaves and siliques, and, to a lower extent, in roots, stems and flowers.

It localises to the vacuole membrane. Functionally, high affinity carnitine transporter involved in the active cellular uptake of carnitine. Also transports organic cations. The chain is Organic cation/carnitine transporter 5 (OCT5) from Arabidopsis thaliana (Mouse-ear cress).